Here is a 142-residue protein sequence, read N- to C-terminus: Transcription antitermination protein NusB (142 aa).

The protein belongs to the NusB family.

Involved in transcription antitermination. Required for transcription of ribosomal RNA (rRNA) genes. Binds specifically to the boxA antiterminator sequence of the ribosomal RNA (rrn) operons. In Levilactobacillus brevis (strain ATCC 367 / BCRC 12310 / CIP 105137 / JCM 1170 / LMG 11437 / NCIMB 947 / NCTC 947) (Lactobacillus brevis), this protein is Transcription antitermination protein NusB.